The sequence spans 384 residues: 8-amino-7-oxononanoate synthase (384 aa).

R21 lines the substrate pocket. 108-109 lines the pyridoxal 5'-phosphate pocket; it reads GF. H133 lines the substrate pocket. Pyridoxal 5'-phosphate contacts are provided by S179, H207, and T233. N6-(pyridoxal phosphate)lysine is present on K236. T352 provides a ligand contact to substrate.

The protein belongs to the class-II pyridoxal-phosphate-dependent aminotransferase family. BioF subfamily. In terms of assembly, homodimer. Pyridoxal 5'-phosphate is required as a cofactor.

It carries out the reaction 6-carboxyhexanoyl-[ACP] + L-alanine + H(+) = (8S)-8-amino-7-oxononanoate + holo-[ACP] + CO2. The protein operates within cofactor biosynthesis; biotin biosynthesis. Catalyzes the decarboxylative condensation of pimeloyl-[acyl-carrier protein] and L-alanine to produce 8-amino-7-oxononanoate (AON), [acyl-carrier protein], and carbon dioxide. The sequence is that of 8-amino-7-oxononanoate synthase from Escherichia coli (strain UTI89 / UPEC).